Consider the following 500-residue polypeptide: ATP synthase subunit beta (500 aa).

An ATP-binding site is contributed by 157 to 164; the sequence is GGAGVGKT.

This sequence belongs to the ATPase alpha/beta chains family. F-type ATPases have 2 components, CF(1) - the catalytic core - and CF(0) - the membrane proton channel. CF(1) has five subunits: alpha(3), beta(3), gamma(1), delta(1), epsilon(1). CF(0) has three main subunits: a(1), b(2) and c(9-12). The alpha and beta chains form an alternating ring which encloses part of the gamma chain. CF(1) is attached to CF(0) by a central stalk formed by the gamma and epsilon chains, while a peripheral stalk is formed by the delta and b chains.

The protein resides in the cell inner membrane. It catalyses the reaction ATP + H2O + 4 H(+)(in) = ADP + phosphate + 5 H(+)(out). Produces ATP from ADP in the presence of a proton gradient across the membrane. The catalytic sites are hosted primarily by the beta subunits. In Salinibacter ruber (strain DSM 13855 / M31), this protein is ATP synthase subunit beta.